Reading from the N-terminus, the 502-residue chain is Actin-binding protein WASF3 (502 aa).

A coiled-coil region spans residues 57–93 (NEANNFYIRANSLQDRIDRLAVKVTQLDSTVEEVSLQ). A Phosphotyrosine; by ABL1 modification is found at Tyr151. Positions 162 to 206 (KEKMLQDTEDKRKEKRRQKEQKRIDGTTREVKKVRKARNRRQEWN) form a coiled coil. Disordered regions lie at residues 169–210 (TEDK…MMAY) and 223–443 (SVYH…ARSD). Basic and acidic residues predominate over residues 182–192 (QKRIDGTTREV). A compositionally biased stretch (polar residues) spans 223–237 (SVYHGASSEGSLSPD). Position 248 is a phosphotyrosine; by ABL1 (Tyr248). The segment covering 302–312 (QQPPPPPPPQA) has biased composition (pro residues). Tyr337 carries the phosphotyrosine; by ABL1 modification. Composition is skewed to pro residues over residues 341–352 (SGPPPPPPPPVI) and 394–410 (APPP…PPGP). The segment covering 411-423 (GSSLSSSPMHGPP) has biased composition (low complexity). Positions 440-457 (ARSDLLAAIRMGIQLKKV) constitute a WH2 domain. Tyr486 bears the Phosphotyrosine; by ABL1 mark.

This sequence belongs to the SCAR/WAVE family. In terms of assembly, binds actin and the Arp2/3 complex. Post-translationally, phosphorylation by ABL1 promotes lamellipodia formation and cell migration. Expressed in ovary and brain.

The protein resides in the cytoplasm. Its subcellular location is the cytoskeleton. Downstream effector molecules involved in the transmission of signals from tyrosine kinase receptors and small GTPases to the actin cytoskeleton. Plays a role in the regulation of cell morphology and cytoskeletal organization. Required in the control of cell shape. The protein is Actin-binding protein WASF3 (WASF3) of Homo sapiens (Human).